Here is a 491-residue protein sequence, read N- to C-terminus: Glutamate--tRNA ligase (491 aa).

The 'HIGH' region motif lies at 9–19; it reads PSPTGTPHVGM. The 'KMSKS' region signature appears at 253–257; that stretch reads KLSKR. Lys-256 contacts ATP.

Belongs to the class-I aminoacyl-tRNA synthetase family. Glutamate--tRNA ligase type 1 subfamily. Monomer.

Its subcellular location is the cytoplasm. It catalyses the reaction tRNA(Glu) + L-glutamate + ATP = L-glutamyl-tRNA(Glu) + AMP + diphosphate. Its function is as follows. Catalyzes the attachment of glutamate to tRNA(Glu) in a two-step reaction: glutamate is first activated by ATP to form Glu-AMP and then transferred to the acceptor end of tRNA(Glu). This is Glutamate--tRNA ligase from Leifsonia xyli subsp. xyli (strain CTCB07).